Reading from the N-terminus, the 195-residue chain is Imidazoleglycerol-phosphate dehydratase (195 aa).

It belongs to the imidazoleglycerol-phosphate dehydratase family.

Its subcellular location is the cytoplasm. The enzyme catalyses D-erythro-1-(imidazol-4-yl)glycerol 3-phosphate = 3-(imidazol-4-yl)-2-oxopropyl phosphate + H2O. It participates in amino-acid biosynthesis; L-histidine biosynthesis; L-histidine from 5-phospho-alpha-D-ribose 1-diphosphate: step 6/9. The protein is Imidazoleglycerol-phosphate dehydratase of Endomicrobium trichonymphae.